Consider the following 489-residue polypeptide: 5-hydroxytryptamine receptor 3A (489 aa).

An N-terminal signal peptide occupies residues 1–23 (MRLCIPQVLLALFLSMLTAPGEG). At 24–246 (SRRRATQARD…MKFYVIIRRR (223 aa)) the chain is on the extracellular side. N-linked (GlcNAc...) asparagine glycosylation is found at asparagine 109, asparagine 175, and asparagine 191. A disulfide bond links cysteine 162 and cysteine 176. The helical transmembrane segment at 247–273 (PLFYAVSLLLPSIFLMVVDIVGFCLPP) threads the bilayer. At 274 to 278 (DSGER) the chain is on the cytoplasmic side. Residues 279–297 (VSFKITLLLGYSVFLIIVS) form a helical membrane-spanning segment. Residues 298–307 (DTLPATAIGT) are Extracellular-facing. A helical transmembrane segment spans residues 308 to 326 (PLIGVYFVVCMALLVISLA). Residues 327–466 (ETIFIVRLVH…GYVLDRLLFR (140 aa)) are Cytoplasmic-facing. The HA-stretch; determines single-channel conductance in 5-HT3 receptors stretch occupies residues 425–461 (AVRGLLQELSSIRHFLEKRDEMREVARDWLRVGYVLD). The helical transmembrane segment at 467–486 (IYLLAVLAYSITLVTLWSIW) threads the bilayer. The Extracellular segment spans residues 487–489 (HYS).

Belongs to the ligand-gated ion channel (TC 1.A.9) family. 5-hydroxytryptamine receptor (TC 1.A.9.2) subfamily. HTR3A sub-subfamily. Forms homopentameric as well as heteropentameric serotonin-activated cation-selective channel complexes with HTR3B or HTR3C or HTR3D or HTR3E. The homomeric complex is functional but exhibits low conductance with modified voltage dependence, and decreased agonist and antagonist affinity. Heteropentameric complexes display properties which resemble that of neuronal serotonin-activated channels in vivo. Interacts with RIC3. In terms of tissue distribution, brain, spinal cord, and heart.

It is found in the postsynaptic cell membrane. The protein localises to the cell membrane. The enzyme catalyses Na(+)(in) = Na(+)(out). It catalyses the reaction K(+)(in) = K(+)(out). The catalysed reaction is Ca(2+)(in) = Ca(2+)(out). It carries out the reaction Mg(2+)(in) = Mg(2+)(out). Forms serotonin (5-hydroxytryptamine/5-HT3)-activated cation-selective channel complexes, which when activated cause fast, depolarizing responses in neurons. The polypeptide is 5-hydroxytryptamine receptor 3A (Mus musculus (Mouse)).